The sequence spans 161 residues: Type IV major fimbrial protein FimA (161 aa).

Positions 1–7 (MKSLQKG) are cleaved as a propeptide — leader sequence. Phe8 carries the N-methylphenylalanine modification. The helical transmembrane segment at 8–28 (FTLIELMIVVAIIGILAAFAI) threads the bilayer. A disulfide bridge links Cys63 with Cys106.

This sequence belongs to the N-Me-Phe pilin family. In terms of assembly, the pili are polar flexible filaments of about 5.4 nanometers diameter and 2.5 micrometers average length; they consist of only a single polypeptide chain arranged in a helical configuration of five subunits per turn in the assembled pilus.

The protein localises to the fimbrium. It is found in the membrane. Its function is as follows. Major component of the type IV fimbriae that plays an essential role in twitching motility, natural transformation, and protease secretion. The polypeptide is Type IV major fimbrial protein FimA (fimA) (Dichelobacter nodosus (Bacteroides nodosus)).